Consider the following 603-residue polypeptide: UvrABC system protein C (603 aa).

The region spanning 15–92 (DKPGCYLMKN…IQKHQPYFNI (78 aa)) is the GIY-YIG domain. The 36-residue stretch at 197–232 (ATVKRQLTKKMQRAAENMEFERAAEIRDQLHYIEVT) folds into the UVR domain.

Belongs to the UvrC family. Interacts with UvrB in an incision complex.

The protein localises to the cytoplasm. Functionally, the UvrABC repair system catalyzes the recognition and processing of DNA lesions. UvrC both incises the 5' and 3' sides of the lesion. The N-terminal half is responsible for the 3' incision and the C-terminal half is responsible for the 5' incision. The sequence is that of UvrABC system protein C from Limosilactobacillus reuteri (strain DSM 20016) (Lactobacillus reuteri).